Here is a 904-residue protein sequence, read N- to C-terminus: Shieldin complex subunit 2 (904 aa).

A sufficient for interaction with SHLD3 and MAD2L2 region spans residues 1-60 (MSGGSQVHIFWGAPVAPLKMTVSQDTASLMSVADPWKKIHLLYSQHSLYLKDEKQHKNLE). The interval 1–568 (MSGGSQVHIF…AYVSSKHSYL (568 aa)) is interaction with ASTE1. The segment at 721-891 (KCSGVVLIQA…LQQDFSLLDF (171 aa)) is mediates interaction with SHLD1.

The protein belongs to the SHLD2 family. Component of the shieldin complex, consisting of SHLD1, SHLD2, SHLD3 and MAD2L2/REV7. Within the complex, SHLD2 forms a scaffold which interacts with a SHLD3-MAD2L2 subcomplex via its N-terminus, and with SHLD1 via its C-terminus. Interacts with TP53BP1. Interacts with RIF1. Interacts with ASTE1.

It localises to the chromosome. Its function is as follows. Component of the shieldin complex, which plays an important role in repair of DNA double-stranded breaks (DSBs). During G1 and S phase of the cell cycle, the complex functions downstream of TP53BP1 to promote non-homologous end joining (NHEJ) and suppress DNA end resection. Mediates various NHEJ-dependent processes including immunoglobulin class-switch recombination, and fusion of unprotected telomeres. This is Shieldin complex subunit 2 from Pongo abelii (Sumatran orangutan).